A 222-amino-acid chain; its full sequence is N-(5'-phosphoribosyl)anthranilate isomerase (222 aa).

It belongs to the TrpF family.

The catalysed reaction is N-(5-phospho-beta-D-ribosyl)anthranilate = 1-(2-carboxyphenylamino)-1-deoxy-D-ribulose 5-phosphate. Its pathway is amino-acid biosynthesis; L-tryptophan biosynthesis; L-tryptophan from chorismate: step 3/5. The protein is N-(5'-phosphoribosyl)anthranilate isomerase of Gloeobacter violaceus (strain ATCC 29082 / PCC 7421).